Consider the following 90-residue polypeptide: Small ribosomal subunit protein bS18A (90 aa).

It belongs to the bacterial ribosomal protein bS18 family. Part of the 30S ribosomal subunit. Forms a tight heterodimer with protein bS6.

Functionally, binds as a heterodimer with protein bS6 to the central domain of the 16S rRNA, where it helps stabilize the platform of the 30S subunit. The polypeptide is Small ribosomal subunit protein bS18A (Roseiflexus castenholzii (strain DSM 13941 / HLO8)).